The primary structure comprises 199 residues: Chaperone protein TorD (199 aa).

The protein belongs to the TorD/DmsD family. TorD subfamily.

The protein resides in the cytoplasm. Its function is as follows. Involved in the biogenesis of TorA. Acts on TorA before the insertion of the molybdenum cofactor and, as a result, probably favors a conformation of the apoenzyme that is competent for acquiring the cofactor. The polypeptide is Chaperone protein TorD (Escherichia coli O81 (strain ED1a)).